The following is a 365-amino-acid chain: Validamycin A dioxygenase (365 aa).

The 111-residue stretch at 174–284 folds into the Fe2OG dioxygenase domain; it reads HATWTQSVNW…LVSLVYFFDA (111 aa). Fe cation contacts are provided by H203, D205, and H261. The interval 331–365 is disordered; the sequence is GELSLSRPGSADSPGSSPADDHPSRPGRHPAQGPQ. The segment covering 336-348 has biased composition (low complexity); the sequence is SRPGSADSPGSSP.

This sequence belongs to the iron/ascorbate-dependent oxidoreductase family. Fe(2+) serves as cofactor.

It carries out the reaction validamycin A + 2-oxoglutarate + O2 = validamycin B + succinate + CO2 + H(+). The enzyme catalyses validoxylamine A + 2-oxoglutarate + O2 = validoxylamine B + succinate + CO2 + H(+). It functions in the pathway antibiotic biosynthesis. Functionally, involved in the biosynthesis of validamycin B, a component of the antifungal and antibiotic validamycin complex used as a crop protectant. Catalyzes the regioselective hydroxylation of validamycin A (4-O-beta-D-glucopyranosyl-validoxylamine A) at the C-6 position to yield validamycin B. To a lesser extent, also able to convert validoxylamine A to its hydroxylated derivative. This is Validamycin A dioxygenase from Streptomyces hygroscopicus subsp. limoneus.